The primary structure comprises 181 residues: Malignant T-cell-amplified sequence 1 (181 aa).

At T81 the chain carries Phosphothreonine; by MAPK1 and MAPK3. One can recognise a PUA domain in the interval 92 to 171 (LPHQQVDKGA…IGIENIHYLN (80 aa)). Position 118 is a phosphoserine; by CDK1 (S118).

It belongs to the MCTS1 family. Interacts (via PUA domain) with DENR; the complex regulates translation reinitiation. Phosphorylation is critical for stabilization and promotion of cell proliferation. As to expression, ubiquitous. Over-expressed in T-cell lymphoid cell lines and in non-Hodgkin lymphoma cell lines as well as in a subset of primary large B-cell lymphomas.

The protein localises to the cytoplasm. Translation regulator forming a complex with DENR to promote translation reinitiation. Translation reinitiation is the process where the small ribosomal subunit remains attached to the mRNA following termination of translation of a regulatory upstream ORF (uORF), and resume scanning on the same mRNA molecule to initiate translation of a downstream ORF, usually the main ORF (mORF). The MCTS1/DENR complex is pivotal to two linked mechanisms essential for translation reinitiation. Firstly, the dissociation of deacylated tRNAs from post-termination 40S ribosomal complexes during ribosome recycling. Secondly, the recruitment in an EIF2-independent manner of aminoacylated initiator tRNA to P site of 40S ribosomes for a new round of translation. This regulatory mechanism governs the translation of more than 150 genes which translation reinitiation is MCTS1/DENR complex-dependent. Consequently, modulates various unrelated biological processes including cell cycle regulation and DNA damage signaling and repair. Notably, it positively regulates interferon gamma immunity to mycobacteria by enhancing the translation of JAK2. The sequence is that of Malignant T-cell-amplified sequence 1 (MCTS1) from Homo sapiens (Human).